A 45-amino-acid chain; its full sequence is Large ribosomal subunit protein bL34 (45 aa).

Residues 1–45 (MTKRTFGGTSRKRKRVSGFRVRMRSHTGRRVIKSRRKRGRERIAV) form a disordered region. The segment covering 10–45 (SRKRKRVSGFRVRMRSHTGRRVIKSRRKRGRERIAV) has biased composition (basic residues).

This sequence belongs to the bacterial ribosomal protein bL34 family.

The chain is Large ribosomal subunit protein bL34 from Prochlorococcus marinus subsp. pastoris (strain CCMP1986 / NIES-2087 / MED4).